Reading from the N-terminus, the 336-residue chain is D-erythrose-4-phosphate dehydrogenase (336 aa).

Residues 11 to 12 and Arg-80 each bind NAD(+); that span reads RI. Residues 153-155, Arg-199, 212-213, and Arg-235 each bind substrate; these read SCT and TK. Cys-154 (nucleophile) is an active-site residue. Position 317 (Asn-317) interacts with NAD(+).

Belongs to the glyceraldehyde-3-phosphate dehydrogenase family. Epd subfamily. As to quaternary structure, homotetramer.

The protein resides in the cytoplasm. It carries out the reaction D-erythrose 4-phosphate + NAD(+) + H2O = 4-phospho-D-erythronate + NADH + 2 H(+). It functions in the pathway cofactor biosynthesis; pyridoxine 5'-phosphate biosynthesis; pyridoxine 5'-phosphate from D-erythrose 4-phosphate: step 1/5. Its function is as follows. Catalyzes the NAD-dependent conversion of D-erythrose 4-phosphate to 4-phosphoerythronate. The sequence is that of D-erythrose-4-phosphate dehydrogenase from Aeromonas hydrophila subsp. hydrophila (strain ATCC 7966 / DSM 30187 / BCRC 13018 / CCUG 14551 / JCM 1027 / KCTC 2358 / NCIMB 9240 / NCTC 8049).